A 401-amino-acid chain; its full sequence is Adenylosuccinate synthetase (401 aa).

GTP-binding positions include 11-17 (GDEGKGK) and 39-41 (GHT). Catalysis depends on aspartate 12, which acts as the Proton acceptor. Positions 12 and 39 each coordinate Mg(2+). IMP contacts are provided by residues 12–15 (DEGK), 37–40 (NAGH), threonine 127, arginine 141, glutamine 212, threonine 227, and arginine 290. The active-site Proton donor is the histidine 40. 286-292 (ATTGRPR) lines the substrate pocket. GTP contacts are provided by residues arginine 292, 318 to 320 (KGD), and 390 to 392 (SVG).

This sequence belongs to the adenylosuccinate synthetase family. Homodimer. Mg(2+) serves as cofactor.

It is found in the cytoplasm. It carries out the reaction IMP + L-aspartate + GTP = N(6)-(1,2-dicarboxyethyl)-AMP + GDP + phosphate + 2 H(+). It participates in purine metabolism; AMP biosynthesis via de novo pathway; AMP from IMP: step 1/2. Functionally, plays an important role in the de novo pathway of purine nucleotide biosynthesis. Catalyzes the first committed step in the biosynthesis of AMP from IMP. This is Adenylosuccinate synthetase from Thermosipho africanus (strain TCF52B).